A 173-amino-acid chain; its full sequence is Ribulose bisphosphate carboxylase small subunit, chloroplastic 7 (173 aa).

The transit peptide at 1 to 49 directs the protein to the chloroplast; sequence MASIPATVATVAQANMVAPFTGLKSNAAFPVTKKVNDFSTLASNGGRVQ.

Belongs to the RuBisCO small chain family. Heterohexadecamer of 8 large and 8 small subunits.

Its subcellular location is the plastid. It localises to the chloroplast. RuBisCO catalyzes two reactions: the carboxylation of D-ribulose 1,5-bisphosphate, the primary event in carbon dioxide fixation, as well as the oxidative fragmentation of the pentose substrate. Both reactions occur simultaneously and in competition at the same active site. Although the small subunit is not catalytic it is essential for maximal activity. This Flaveria pringlei protein is Ribulose bisphosphate carboxylase small subunit, chloroplastic 7.